A 214-amino-acid chain; its full sequence is Cytochrome b (214 aa).

The next 4 helical transmembrane spans lie at 31 to 51, 75 to 96, 111 to 131, and 176 to 196; these read FGSM…FLAI, WIMQ…YIHI, WLSG…GYVL, and FFAL…IHIL. His-81 and His-95 together coordinate heme b. Residues His-180 and His-194 each coordinate heme b. His-199 provides a ligand contact to a ubiquinone.

It belongs to the cytochrome b family. The cytochrome bc1 complex contains 3 respiratory subunits (MT-CYB, CYC1 and UQCRFS1), 2 core proteins (UQCRC1 and UQCRC2) and probably 6 low-molecular weight proteins. Heme b is required as a cofactor.

It localises to the mitochondrion inner membrane. Functionally, component of the ubiquinol-cytochrome c reductase complex (complex III or cytochrome b-c1 complex) that is part of the mitochondrial respiratory chain. The b-c1 complex mediates electron transfer from ubiquinol to cytochrome c. Contributes to the generation of a proton gradient across the mitochondrial membrane that is then used for ATP synthesis. This Agkistrodon contortrix contortrix (Southern copperhead) protein is Cytochrome b (MT-CYB).